We begin with the raw amino-acid sequence, 2999 residues long: TPR and ankyrin repeat-containing protein 1 (2999 aa).

Residues 1 to 87 (MASTTAGRRW…QPRGSTDSAC (87 aa)) form a disordered region. Low complexity predominate over residues 19 to 36 (RGPTPRSRAPGAKLSAPE). TPR repeat units follow at residues 144-177 (AMLL…DPTY) and 179-211 (KGYY…LQRS). ANK repeat units lie at residues 297–327 (EKYV…NIET), 328–361 (IGPN…EWKE), 369–405 (AGCT…DPTL), 538–567 (SQDR…DPRS), 572–593 (EGDT…DIGF), and 621–654 (NGNT…NFNL). 4 disordered regions span residues 684–722 (RRKN…LPCG), 773–831 (MPLP…GASQ), 1151–1211 (LEVE…GCVP), and 1318–1344 (WEED…QTGD). Polar residues-rich tracts occupy residues 699–717 (SRSS…TSFK) and 801–815 (TQRM…NNPV). Residues 1151-1164 (LEVEPGKEGPGREE) are compositionally biased toward basic and acidic residues. Over residues 1318 to 1327 (WEEDDEEVEA) the composition is skewed to acidic residues. TPR repeat units follow at residues 1772–1805 (PYEW…EKEK) and 1866–1899 (LGKI…DLAL).

As to expression, expressed only in the brain. Detected in the hippocampus, hypothalamus and cingulate gyrus.

This Mus musculus (Mouse) protein is TPR and ankyrin repeat-containing protein 1 (Trank1).